Here is a 362-residue protein sequence, read N- to C-terminus: Flagellar P-ring protein (362 aa).

Positions 1–18 are cleaved as a signal peptide; it reads MKHIALIVLYFLSFSVQA.

Belongs to the FlgI family. As to quaternary structure, the basal body constitutes a major portion of the flagellar organelle and consists of four rings (L,P,S, and M) mounted on a central rod.

The protein resides in the periplasm. It localises to the bacterial flagellum basal body. In terms of biological role, assembles around the rod to form the L-ring and probably protects the motor/basal body from shearing forces during rotation. The protein is Flagellar P-ring protein of Marinomonas sp. (strain MWYL1).